The primary structure comprises 67 residues: Large ribosomal subunit protein uL29 (67 aa).

This sequence belongs to the universal ribosomal protein uL29 family.

This is Large ribosomal subunit protein uL29 from Ehrlichia ruminantium (strain Gardel).